We begin with the raw amino-acid sequence, 447 residues long: MSAKMLHVVMYPWFAYGHMIPFLHLSNKLAETGHKVTYILPPKALTRLQNLNLNPTQITFRTITVPRVDGLPAGAENVTDIPDITLHTHLATALDRTRPEFETIVELIKPDVIMYDVAYWVPEVAVKYGAKSVAYSVVSAASVSLSKTVVDRMTPLEKPMTEEERKKKFAQYPHLIQLYGPFGEGITMYDRLTGMLSKCDAIACRTCREIEGKYCQYLSTQYEKKVTLTGPVLPEPEVGATLEAPWSEWLSRFKLGSVLFCAFGSQFYLDKDQFQEIILGLEMTNLPFLMAVQPPKGCATIEEAYPEGFAERVKDRGVVTSQWVQQLVILAHPAVGCFVNHCAFGTMWEALLSEKQLVMIPQLGDQILNTKMLADELKVGVEVERGIGGWVSKENLCKAIKSVMDEDSEIGKDVKQSHEKWRATLSSKDLMSTYIDSFIKDLQALVE.

His-18 functions as the Proton acceptor in the catalytic mechanism. Asp-116 acts as the Charge relay in catalysis. UDP is bound by residues Ser-265, Trp-323, Val-324, His-341, Thr-346, and Glu-349.

Belongs to the UDP-glycosyltransferase family. In terms of tissue distribution, mainly expressed in flowers, flower buds and young leaves, and, to a lesser extent, in old leaves, stems and roots.

The protein operates within secondary metabolite biosynthesis; terpenoid biosynthesis. Component of the oleanane-type triterpene saponins (e.g. saponarioside A and saponarioside B) biosynthetic pathway, leading to the production of natural products with detergent properties used as traditional sources of soap. A glycosyltransferase that mediates the conversion of QA-triF to QA-triFR via the elongation of the C-28 sugar chain with a deoxyhexose on the D-fucose moiety. The sequence is that of UDP-glucosyl transferase 79T1 from Saponaria officinalis (Common soapwort).